The primary structure comprises 439 residues: MESGKISVETETLSKTLIKPSSPTPQSLSRYNLSYNDQNIYQTCVSVGFFYENPDGIEISTIREQLQNSLSKTLVSYYPFAGKVVKNDYIHCNDDGIEFVEVRIRCRMNDILKYELRSYARDLVLPKRVTVGSEDTTAIVQLSHFDCGGLAVAFGISHKVADGGTIASFMKDWAASACYLSSSHHVPTPLLVSDSIFPRQDNIICEQFPTSKNCVEKTFIFPPEAIEKLKSKAVEFGIEKPTRVEVLTAFLSRCATVAGKSAAKNNNCGQSLPFPVLQAINLRPILELPQNSVGNLVSIYFSRTIKENDYLNEKEYTKLVINELRKEKQKIKNLSREKLTYVAQMEEFVKSLKEFDISNFLDIDAYLSDSWCRFPFYDVDFGWGKPIWVCLFQPYIKNCVVMMDYPFGDDYGIEAIVSFEQEKMSAFEKNEQLLQFVSN.

Catalysis depends on H158, which acts as the Proton acceptor. Residues 317–344 adopt a coiled-coil conformation; the sequence is TKLVINELRKEKQKIKNLSREKLTYVAQ. Catalysis depends on D380, which acts as the Proton acceptor.

It belongs to the plant acyltransferase family. Monomer. As to expression, predominantly expressed in young leaves of mature plants. Low expression in stems and flowers and not detected in roots. Confined to the laticifer and idioblast cells of leaves, stems, and flower buds.

Its subcellular location is the cytoplasm. It localises to the nucleus. The enzyme catalyses 4-O-deacetylvindoline + acetyl-CoA = vindoline + CoA. The protein operates within alkaloid biosynthesis; vindoline biosynthesis. Involved in the biosynthesis of vindoline, a precursor of vinblastine and vincristine. The sequence is that of Deacetylvindoline O-acetyltransferase from Catharanthus roseus (Madagascar periwinkle).